Consider the following 227-residue polypeptide: Ribosome-recycling factor, chloroplastic (227 aa).

Residues 1–34 (WTAAANYVKIKVGTGKFARKTVVLSQKRTGTLKC) constitute a chloroplast transit peptide. Residues 167-212 (KVALRNIRRDAIKSYDKLEKEKKLSEDNVKDLSSDLQKVIDEYIKK) are a coiled coil.

This sequence belongs to the RRF family.

It is found in the plastid. The protein resides in the chloroplast. Its function is as follows. Responsible for the release of ribosomes from messenger RNA at the termination of chloroplastic protein biosynthesis. In Daucus carota (Wild carrot), this protein is Ribosome-recycling factor, chloroplastic (RRF).